The primary structure comprises 91 residues: Small ribosomal subunit protein bS20 (91 aa).

This sequence belongs to the bacterial ribosomal protein bS20 family.

Binds directly to 16S ribosomal RNA. This Wolinella succinogenes (strain ATCC 29543 / DSM 1740 / CCUG 13145 / JCM 31913 / LMG 7466 / NCTC 11488 / FDC 602W) (Vibrio succinogenes) protein is Small ribosomal subunit protein bS20.